Here is a 186-residue protein sequence, read N- to C-terminus: ATP synthase subunit delta (186 aa).

It belongs to the ATPase delta chain family. In terms of assembly, F-type ATPases have 2 components, F(1) - the catalytic core - and F(0) - the membrane proton channel. F(1) has five subunits: alpha(3), beta(3), gamma(1), delta(1), epsilon(1). F(0) has three main subunits: a(1), b(2) and c(10-14). The alpha and beta chains form an alternating ring which encloses part of the gamma chain. F(1) is attached to F(0) by a central stalk formed by the gamma and epsilon chains, while a peripheral stalk is formed by the delta and b chains.

It localises to the cell inner membrane. In terms of biological role, f(1)F(0) ATP synthase produces ATP from ADP in the presence of a proton or sodium gradient. F-type ATPases consist of two structural domains, F(1) containing the extramembraneous catalytic core and F(0) containing the membrane proton channel, linked together by a central stalk and a peripheral stalk. During catalysis, ATP synthesis in the catalytic domain of F(1) is coupled via a rotary mechanism of the central stalk subunits to proton translocation. This protein is part of the stalk that links CF(0) to CF(1). It either transmits conformational changes from CF(0) to CF(1) or is implicated in proton conduction. This chain is ATP synthase subunit delta, found in Bacteroides fragilis (strain ATCC 25285 / DSM 2151 / CCUG 4856 / JCM 11019 / LMG 10263 / NCTC 9343 / Onslow / VPI 2553 / EN-2).